The following is a 150-amino-acid chain: MAIRVQQAAFDPGQELNALHAQNVGIGAVVGFVGYVRDFNDGREVGGMFLEHYPGMTEKALGKIAAEAGQRWPLLRLEILHRIGRLEPGEPIVFVGCASAHRQAAFDACNFVMDYLKTRAPFWKKEDTAEGPRWVEGRCSDQAAAQRWEE.

Residues 35–37, 101–102, K117, and 124–126 contribute to the substrate site; these read YVR, HR, and KKE.

Belongs to the MoaE family. In terms of assembly, heterotetramer of 2 MoaD subunits and 2 MoaE subunits. Also stable as homodimer. The enzyme changes between these two forms during catalysis.

It carries out the reaction 2 [molybdopterin-synthase sulfur-carrier protein]-C-terminal-Gly-aminoethanethioate + cyclic pyranopterin phosphate + H2O = molybdopterin + 2 [molybdopterin-synthase sulfur-carrier protein]-C-terminal Gly-Gly + 2 H(+). It functions in the pathway cofactor biosynthesis; molybdopterin biosynthesis. In terms of biological role, converts molybdopterin precursor Z into molybdopterin. This requires the incorporation of two sulfur atoms into precursor Z to generate a dithiolene group. The sulfur is provided by MoaD. This Pseudomonas aeruginosa (strain ATCC 15692 / DSM 22644 / CIP 104116 / JCM 14847 / LMG 12228 / 1C / PRS 101 / PAO1) protein is Molybdopterin synthase catalytic subunit (moaE).